The following is a 336-amino-acid chain: Tyrosine recombinase XerC (336 aa).

The Core-binding (CB) domain maps to 14–106; sequence VARCRWLEPF…SVKSFYRFLL (93 aa). Residues 127 to 330 enclose the Tyr recombinase domain; the sequence is KVPRFVSEEE…TFSRLKEIYD (204 aa). Active-site residues include Arg-183, Lys-207, His-282, Arg-285, and His-308. Residue Tyr-317 is the O-(3'-phospho-DNA)-tyrosine intermediate of the active site.

The protein belongs to the 'phage' integrase family. XerC subfamily. Forms a cyclic heterotetrameric complex composed of two molecules of XerC and two molecules of XerD.

The protein localises to the cytoplasm. Functionally, site-specific tyrosine recombinase, which acts by catalyzing the cutting and rejoining of the recombining DNA molecules. The XerC-XerD complex is essential to convert dimers of the bacterial chromosome into monomers to permit their segregation at cell division. It also contributes to the segregational stability of plasmids. This is Tyrosine recombinase XerC from Chlorobaculum parvum (strain DSM 263 / NCIMB 8327) (Chlorobium vibrioforme subsp. thiosulfatophilum).